The following is a 276-amino-acid chain: Diaminopimelate epimerase (276 aa).

3 residues coordinate substrate: asparagine 11, glutamine 44, and asparagine 64. Cysteine 73 serves as the catalytic Proton donor. Substrate contacts are provided by residues 74-75, asparagine 159, asparagine 192, and 210-211; these read IN and ER. Cysteine 219 functions as the Proton acceptor in the catalytic mechanism. A substrate-binding site is contributed by 220 to 221; the sequence is GS.

The protein belongs to the diaminopimelate epimerase family. Homodimer.

Its subcellular location is the cytoplasm. It catalyses the reaction (2S,6S)-2,6-diaminopimelate = meso-2,6-diaminopimelate. The protein operates within amino-acid biosynthesis; L-lysine biosynthesis via DAP pathway; DL-2,6-diaminopimelate from LL-2,6-diaminopimelate: step 1/1. In terms of biological role, catalyzes the stereoinversion of LL-2,6-diaminopimelate (L,L-DAP) to meso-diaminopimelate (meso-DAP), a precursor of L-lysine and an essential component of the bacterial peptidoglycan. This chain is Diaminopimelate epimerase, found in Wigglesworthia glossinidia brevipalpis.